The chain runs to 234 residues: Proteasome subunit alpha type-2 (234 aa).

Residue A2 is modified to N-acetylalanine. Y6 is modified (phosphotyrosine). S7, S14, and S16 each carry phosphoserine. Residue Y24 is modified to Phosphotyrosine. The residue at position 70 (K70) is an N6-acetyllysine. Phosphotyrosine is present on residues Y76 and Y121. N6-acetyllysine is present on K171.

Belongs to the peptidase T1A family. The 26S proteasome consists of a 20S proteasome core and two 19S regulatory subunits. The 20S proteasome core is a barrel-shaped complex made of 28 subunits that are arranged in four stacked rings. The two outer rings are each formed by seven alpha subunits, and the two inner rings are formed by seven beta subunits. The proteolytic activity is exerted by three beta-subunits PSMB5, PSMB6 and PSMB7. In terms of processing, phosphorylated on tyrosine residues; which may be important for nuclear import. As to expression, detected in liver (at protein level).

The protein localises to the cytoplasm. It localises to the nucleus. Functionally, component of the 20S core proteasome complex involved in the proteolytic degradation of most intracellular proteins. This complex plays numerous essential roles within the cell by associating with different regulatory particles. Associated with two 19S regulatory particles, forms the 26S proteasome and thus participates in the ATP-dependent degradation of ubiquitinated proteins. The 26S proteasome plays a key role in the maintenance of protein homeostasis by removing misfolded or damaged proteins that could impair cellular functions, and by removing proteins whose functions are no longer required. Associated with the PA200 or PA28, the 20S proteasome mediates ubiquitin-independent protein degradation. This type of proteolysis is required in several pathways including spermatogenesis (20S-PA200 complex) or generation of a subset of MHC class I-presented antigenic peptides (20S-PA28 complex). The protein is Proteasome subunit alpha type-2 (Psma2) of Mus musculus (Mouse).